A 143-amino-acid polypeptide reads, in one-letter code: Large ribosomal subunit protein uL13 (143 aa).

This sequence belongs to the universal ribosomal protein uL13 family. In terms of assembly, part of the 50S ribosomal subunit.

In terms of biological role, this protein is one of the early assembly proteins of the 50S ribosomal subunit, although it is not seen to bind rRNA by itself. It is important during the early stages of 50S assembly. This chain is Large ribosomal subunit protein uL13, found in Neisseria gonorrhoeae (strain ATCC 700825 / FA 1090).